The sequence spans 587 residues: Laccase abr2 (587 aa).

The N-terminal stretch at 1 to 17 (MWYQSASLLGVAAVAQA) is a signal peptide. 2 Plastocyanin-like domains span residues 41–137 (IFVN…VHIR) and 168–350 (LVML…ANDG). N-linked (GlcNAc...) asparagine glycosylation is present at asparagine 71. 4 residues coordinate Cu cation: histidine 75, histidine 77, histidine 119, and histidine 121. Asparagine 228, asparagine 383, asparagine 420, and asparagine 462 each carry an N-linked (GlcNAc...) asparagine glycan. A Plastocyanin-like 3 domain is found at 397–577 (PPYPAISPAS…ILMDGVDVWP (181 aa)). Histidine 487 lines the Cu cation pocket. Asparagine 504 carries an N-linked (GlcNAc...) asparagine glycan.

Belongs to the multicopper oxidase family.

The protein resides in the cell surface. It participates in pigment biosynthesis; melanin biosynthesis. Functionally, laccase; part of the gene cluster that mediates the biosynthesis of dihydroxynaphthalene (DHN)-melanin, a bluish-green pigment and a structural component of the conidial wall. The first step of the pathway is the production of the heptaketide naphtopyrone YWA1 by the polyketide synthase alb1 though condensation of acetyl-CoA with malonyl-CoA. The naphtopyrone YWA1 is then converted to the pentaketide 1,3,6,8-tetrahydroxynaphthalene (1,3,6,8-THN) by the heptaketide hydrolyase ayg1 though chain-length shortening. 1,3,6,8-THN is substrate of the hydroxynaphthalene reductase arp2 to yield scytalone. The scytalone dehydratase arp1 then reduces scytalone to 1,3,8-THN. 1,3,8-THN is also substrate of the hydroxynaphthalene reductase arp2 to yield vermelone. Vermelone is further converted by the multicopper oxidase abr1 to 1,8-DHN. Finally the laccase abr2 transforms 1,8-DHN to DHN-melanin. DHN-melanin biosynthesis appears to be initiated in endosomes where early enzymes (abl1, ayg1, arp1 and arp2) localize, with exocytosis leading to melanin deposition on the cell surface where late enzymes (abr1 and abr2) localize. DHN-melanin is an important structural component of the outer cell wall and is required for the presence of conidial surface hydrophobins. DHN-melanin also plays a crucial role in fungal virulence, including a protective role against the host's immune defenses. DHN-melanin also protects conidia against amoeba predation. This Aspergillus fumigatus (strain ATCC MYA-4609 / CBS 101355 / FGSC A1100 / Af293) (Neosartorya fumigata) protein is Laccase abr2.